The primary structure comprises 370 residues: 3,7-dimethylxanthine N-methyltransferase CkTbS (370 aa).

Position 24 (Tyr-24) interacts with S-adenosyl-L-homocysteine. Residue Thr-31 participates in theobromine binding. Residues Cys-67, Asn-72, Asp-104, Leu-105, Ser-139, and Phe-140 each coordinate S-adenosyl-L-homocysteine. Residues Tyr-157, His-160, and Trp-161 each contribute to the theobromine site. Asn-178 serves as a coordination point for Mg(2+). His-226 is a theobromine binding site. Residues Asp-264, Phe-266, and Asn-267 each coordinate Mg(2+). Residue Phe-322 coordinates theobromine.

The protein belongs to the methyltransferase superfamily. Type-7 methyltransferase family. Requires Mg(2+) as cofactor.

It carries out the reaction 7-methylxanthine + S-adenosyl-L-methionine = theobromine + S-adenosyl-L-homocysteine + H(+). The protein operates within alkaloid biosynthesis. In terms of biological role, involved in the biosynthesis of caffeine in cv. Puer. Involved in the biosynthesis of theacrine in cv. Kucha, a caffeine-like xanthine alkaloid with diverse beneficial biological activities including anti-depressive, sedative, and hypnotic activities, improving learning and memory, increasing exercise activity, and preventing nonalcoholic fatty liver disease. Catalyzes the conversion of 7-methylxanthine (7mX) to theobromine but not able to convert paraxanthine to caffeine. This chain is 3,7-dimethylxanthine N-methyltransferase CkTbS, found in Camellia sinensis var. assamica (Assam tea).